Consider the following 194-residue polypeptide: Probable GTP-binding protein EngB (194 aa).

The EngB-type G domain maps to 22–194; the sequence is KIPQIAIVGK…LRIFEEVIEK (173 aa). GTP contacts are provided by residues 30–37, 57–61, 75–78, 142–145, and 173–175; these read GKSNVGKS, GKTRG, DLPG, TKAD, and FSA. 2 residues coordinate Mg(2+): serine 37 and threonine 59.

This sequence belongs to the TRAFAC class TrmE-Era-EngA-EngB-Septin-like GTPase superfamily. EngB GTPase family. Requires Mg(2+) as cofactor.

Its function is as follows. Necessary for normal cell division and for the maintenance of normal septation. The protein is Probable GTP-binding protein EngB of Caldanaerobacter subterraneus subsp. tengcongensis (strain DSM 15242 / JCM 11007 / NBRC 100824 / MB4) (Thermoanaerobacter tengcongensis).